We begin with the raw amino-acid sequence, 273 residues long: MSQPILVFDSGIGGLSVLAEIRKLLPHHDYCYLFDNARLPYGELEEQELISGCVALIDQVVERTHAAIVVVACNTASTVVLPALRATLSIPVVGVVPAIKPAAQLSKSKRIGLLATPGTVKRHYTYELISQFADDCHVELFGSSELVLMAEQKIATGQLDMVRLTQVLSPIVEADLDVLVLGCTHFPMLRDELQQVLGQGVTLLDSGEAIAKRVKTLLAETKSDEQVQEEDAHSNLLMQAFYTKAEISEGLATTLVDCGFSTLERITTINSNG.

Substrate-binding positions include 9 to 10 (DS) and 41 to 42 (YG). The active-site Proton donor/acceptor is the Cys73. 74–75 (NT) is a substrate binding site. Cys183 (proton donor/acceptor) is an active-site residue. Residue 184–185 (TH) participates in substrate binding.

The protein belongs to the aspartate/glutamate racemases family.

It catalyses the reaction L-glutamate = D-glutamate. The protein operates within cell wall biogenesis; peptidoglycan biosynthesis. Its function is as follows. Provides the (R)-glutamate required for cell wall biosynthesis. This Shewanella sp. (strain ANA-3) protein is Glutamate racemase.